A 469-amino-acid polypeptide reads, in one-letter code: UDP-N-acetylmuramoylalanine--D-glutamate ligase (469 aa).

123-129 (GTNGKST) serves as a coordination point for ATP.

Belongs to the MurCDEF family.

Its subcellular location is the cytoplasm. The catalysed reaction is UDP-N-acetyl-alpha-D-muramoyl-L-alanine + D-glutamate + ATP = UDP-N-acetyl-alpha-D-muramoyl-L-alanyl-D-glutamate + ADP + phosphate + H(+). It participates in cell wall biogenesis; peptidoglycan biosynthesis. Cell wall formation. Catalyzes the addition of glutamate to the nucleotide precursor UDP-N-acetylmuramoyl-L-alanine (UMA). This chain is UDP-N-acetylmuramoylalanine--D-glutamate ligase, found in Phenylobacterium zucineum (strain HLK1).